The chain runs to 268 residues: 4-diphosphocytidyl-2-C-methyl-D-erythritol kinase (268 aa).

Residue K10 is part of the active site. 101–111 lines the ATP pocket; it reads PTQAGLGGGST. D143 is a catalytic residue.

Belongs to the GHMP kinase family. IspE subfamily.

The enzyme catalyses 4-CDP-2-C-methyl-D-erythritol + ATP = 4-CDP-2-C-methyl-D-erythritol 2-phosphate + ADP + H(+). The protein operates within isoprenoid biosynthesis; isopentenyl diphosphate biosynthesis via DXP pathway; isopentenyl diphosphate from 1-deoxy-D-xylulose 5-phosphate: step 3/6. Functionally, catalyzes the phosphorylation of the position 2 hydroxy group of 4-diphosphocytidyl-2C-methyl-D-erythritol. This is 4-diphosphocytidyl-2-C-methyl-D-erythritol kinase from Helicobacter pylori (strain ATCC 700392 / 26695) (Campylobacter pylori).